A 324-amino-acid chain; its full sequence is Glyoxylate/hydroxypyruvate reductase B (324 aa).

Residues Arg237 and Glu266 contribute to the active site. His285 serves as the catalytic Proton donor.

This sequence belongs to the D-isomer specific 2-hydroxyacid dehydrogenase family. GhrB subfamily. Homodimer.

The protein resides in the cytoplasm. It carries out the reaction glycolate + NADP(+) = glyoxylate + NADPH + H(+). It catalyses the reaction (R)-glycerate + NAD(+) = 3-hydroxypyruvate + NADH + H(+). The enzyme catalyses (R)-glycerate + NADP(+) = 3-hydroxypyruvate + NADPH + H(+). Catalyzes the NADPH-dependent reduction of glyoxylate and hydroxypyruvate into glycolate and glycerate, respectively. The chain is Glyoxylate/hydroxypyruvate reductase B from Enterobacter sp. (strain 638).